Reading from the N-terminus, the 133-residue chain is uncharacterized protein (133 aa).

Residues 1–82 constitute a DNA-binding region (recombinase); the sequence is MIDKIKKGYS…QKMLHDRQNF (82 aa).

This is an uncharacterized protein from Bacillus phage phi105 (Bacteriophage phi-105).